We begin with the raw amino-acid sequence, 189 residues long: MSDKPLPSSFDDDPDFFQDNAWKKLGRRLKEEPLVPLGIGATCYALFRAYRSMKMGDSVQVNRMFRARIYAQAFTLLAVCAGSVYYKTERDQRKQLEKAMDLKKQQAKRDAWLKELEIREQEDKDWQSRHATIEQAAKGVEVKPFVADSAPDAAGRDASEEPAKESGDKKDGGSGGVLSAVKNLSWGSK.

The 92-residue stretch at 6–97 (LPSSFDDDPD…TERDQRKQLE (92 aa)) folds into the HIG1 domain. 2 helical membrane-spanning segments follow: residues 33-49 (PLVP…LFRA) and 64-86 (MFRA…SVYY). The stretch at 86 to 122 (YKTERDQRKQLEKAMDLKKQQAKRDAWLKELEIREQE) forms a coiled coil. The disordered stretch occupies residues 142 to 189 (VKPFVADSAPDAAGRDASEEPAKESGDKKDGGSGGVLSAVKNLSWGSK). A compositionally biased stretch (basic and acidic residues) spans 154 to 172 (AGRDASEEPAKESGDKKDG).

It belongs to the RCF1 family. As to quaternary structure, associates with the respiratory chain complex III/complex IV supercomplex.

The protein resides in the mitochondrion membrane. Its function is as follows. Cytochrome c oxidase subunit which plays a role in assembly of respiratory supercomplexes. This is Respiratory supercomplex factor 1, mitochondrial (RCF1) from Trichophyton verrucosum (strain HKI 0517).